The chain runs to 529 residues: N5-hydroxyornithine acetylase sidL (529 aa).

2 disordered regions span residues 59–95 and 239–258; these read ASVNGEGHAQPAGDDHATAVDAGDGSAQKRKKRVRPF and SPWPGSSGSPNDSRPGSPVA. Substrate is bound at residue His-462. Residue Glu-498 is the Proton acceptor of the active site.

This sequence belongs to the lysine N-acyltransferase mbtK family.

The protein resides in the cytoplasm. The protein localises to the cytosol. It functions in the pathway siderophore biosynthesis. Its function is as follows. Acyltransferase; part of the gene cluster that mediates the biosynthesis of at least 11 siderophores, including beauverichelin A, dimerumic acid (DA), Na-dimethyl coprogen (NADC), eleutherazine B, ferricrocin (FC), fusarinine A, fusarinine C (FsC), metachelin A, mevalonolactone, rhodotorulic acid (RA) and tenellin. This cocktail of siderophores for iron metabolism is essential for virulence, and more specifically for the fungal virulence in penetrating through the host cuticle. Siderophore synthesis is also involved in conidial germination under iron-deficient conditions. SIDL contributes to partial production of ferricrocin under iron-limiting conditions via the acetylation of N(5)-hydroxyornithine. The chain is N5-hydroxyornithine acetylase sidL from Beauveria bassiana (strain ARSEF 2860) (White muscardine disease fungus).